The following is a 242-amino-acid chain: Leucyl/phenylalanyl-tRNA--protein transferase (242 aa).

The protein belongs to the L/F-transferase family.

It localises to the cytoplasm. It carries out the reaction N-terminal L-lysyl-[protein] + L-leucyl-tRNA(Leu) = N-terminal L-leucyl-L-lysyl-[protein] + tRNA(Leu) + H(+). The catalysed reaction is N-terminal L-arginyl-[protein] + L-leucyl-tRNA(Leu) = N-terminal L-leucyl-L-arginyl-[protein] + tRNA(Leu) + H(+). The enzyme catalyses L-phenylalanyl-tRNA(Phe) + an N-terminal L-alpha-aminoacyl-[protein] = an N-terminal L-phenylalanyl-L-alpha-aminoacyl-[protein] + tRNA(Phe). Functions in the N-end rule pathway of protein degradation where it conjugates Leu, Phe and, less efficiently, Met from aminoacyl-tRNAs to the N-termini of proteins containing an N-terminal arginine or lysine. The chain is Leucyl/phenylalanyl-tRNA--protein transferase from Edwardsiella ictaluri (strain 93-146).